Here is a 417-residue protein sequence, read N- to C-terminus: Serine hydroxymethyltransferase (417 aa).

Residues Leu121 and 125-127 contribute to the (6S)-5,6,7,8-tetrahydrofolate site; that span reads GHL. An N6-(pyridoxal phosphate)lysine modification is found at Lys229. 355–357 is a binding site for (6S)-5,6,7,8-tetrahydrofolate; that stretch reads SPF.

The protein belongs to the SHMT family. Homodimer. Pyridoxal 5'-phosphate is required as a cofactor.

Its subcellular location is the cytoplasm. The catalysed reaction is (6R)-5,10-methylene-5,6,7,8-tetrahydrofolate + glycine + H2O = (6S)-5,6,7,8-tetrahydrofolate + L-serine. It functions in the pathway one-carbon metabolism; tetrahydrofolate interconversion. It participates in amino-acid biosynthesis; glycine biosynthesis; glycine from L-serine: step 1/1. Functionally, catalyzes the reversible interconversion of serine and glycine with tetrahydrofolate (THF) serving as the one-carbon carrier. This reaction serves as the major source of one-carbon groups required for the biosynthesis of purines, thymidylate, methionine, and other important biomolecules. Also exhibits THF-independent aldolase activity toward beta-hydroxyamino acids, producing glycine and aldehydes, via a retro-aldol mechanism. The sequence is that of Serine hydroxymethyltransferase from Tolumonas auensis (strain DSM 9187 / NBRC 110442 / TA 4).